Here is a 124-residue protein sequence, read N- to C-terminus: Large ribosomal subunit protein bL12 (124 aa).

This sequence belongs to the bacterial ribosomal protein bL12 family. Homodimer. Part of the ribosomal stalk of the 50S ribosomal subunit. Forms a multimeric L10(L12)X complex, where L10 forms an elongated spine to which 2 to 4 L12 dimers bind in a sequential fashion. Binds GTP-bound translation factors.

Forms part of the ribosomal stalk which helps the ribosome interact with GTP-bound translation factors. Is thus essential for accurate translation. This chain is Large ribosomal subunit protein bL12, found in Paracoccus denitrificans (strain Pd 1222).